Consider the following 254-residue polypeptide: MSHNFKKSLGQNFLQDKNIIEKIVNFIPLENEDVLEIGPGQGALTNLLVKKSKNVLAYEIDKELIPFLKEKIKAKNFTLKHEDFLKSEIDFQDKKIIIANIPYFITSDILFKIFENHKFFTKALIMVQKEIADKLIAKANDSNYGKLSVSSQFFANIKKVINVPRTCFYPQPNVDSAVVYFEFKNDIENIDIEKFLVFIKTCFSQQRKKLSNNLKNVYDLEKIKSVLKKLNLSFEVRPQQIDLNVYKILFYELN.

Positions 12, 14, 38, 59, 83, and 100 each coordinate S-adenosyl-L-methionine.

The protein belongs to the class I-like SAM-binding methyltransferase superfamily. rRNA adenine N(6)-methyltransferase family. RsmA subfamily.

It localises to the cytoplasm. It carries out the reaction adenosine(1518)/adenosine(1519) in 16S rRNA + 4 S-adenosyl-L-methionine = N(6)-dimethyladenosine(1518)/N(6)-dimethyladenosine(1519) in 16S rRNA + 4 S-adenosyl-L-homocysteine + 4 H(+). Specifically dimethylates two adjacent adenosines (A1518 and A1519) in the loop of a conserved hairpin near the 3'-end of 16S rRNA in the 30S particle. May play a critical role in biogenesis of 30S subunits. In Mycoplasma mobile (strain ATCC 43663 / 163K / NCTC 11711) (Mesomycoplasma mobile), this protein is Ribosomal RNA small subunit methyltransferase A.